We begin with the raw amino-acid sequence, 412 residues long: Peptidase T (412 aa).

Histidine 83 serves as a coordination point for Zn(2+). Residue aspartate 85 is part of the active site. Aspartate 145 serves as a coordination point for Zn(2+). The Proton acceptor role is filled by glutamate 179. Zn(2+) contacts are provided by glutamate 180, aspartate 202, and histidine 384.

Belongs to the peptidase M20B family. It depends on Zn(2+) as a cofactor.

It is found in the cytoplasm. The catalysed reaction is Release of the N-terminal residue from a tripeptide.. In terms of biological role, cleaves the N-terminal amino acid of tripeptides. This is Peptidase T from Fusobacterium nucleatum subsp. nucleatum (strain ATCC 25586 / DSM 15643 / BCRC 10681 / CIP 101130 / JCM 8532 / KCTC 2640 / LMG 13131 / VPI 4355).